Consider the following 317-residue polypeptide: Beta-ketoacyl-[acyl-carrier-protein] synthase III (317 aa).

Active-site residues include Cys-112 and His-244. An ACP-binding region spans residues 245 to 249 (QANLR). Asn-274 is a catalytic residue.

This sequence belongs to the thiolase-like superfamily. FabH family. As to quaternary structure, homodimer.

It is found in the cytoplasm. It catalyses the reaction malonyl-[ACP] + acetyl-CoA + H(+) = 3-oxobutanoyl-[ACP] + CO2 + CoA. It functions in the pathway lipid metabolism; fatty acid biosynthesis. Functionally, catalyzes the condensation reaction of fatty acid synthesis by the addition to an acyl acceptor of two carbons from malonyl-ACP. Catalyzes the first condensation reaction which initiates fatty acid synthesis and may therefore play a role in governing the total rate of fatty acid production. Possesses both acetoacetyl-ACP synthase and acetyl transacylase activities. Its substrate specificity determines the biosynthesis of branched-chain and/or straight-chain of fatty acids. The polypeptide is Beta-ketoacyl-[acyl-carrier-protein] synthase III (Salmonella paratyphi A (strain ATCC 9150 / SARB42)).